We begin with the raw amino-acid sequence, 298 residues long: Nucleotide-binding protein MLBr00563 (298 aa).

21 to 28 (GLSGAGRG) is an ATP binding site. 72 to 75 (DVRS) is a binding site for GTP.

The protein belongs to the RapZ-like family.

Displays ATPase and GTPase activities. This chain is Nucleotide-binding protein MLBr00563, found in Mycobacterium leprae (strain Br4923).